A 563-amino-acid polypeptide reads, in one-letter code: Phosphomethylpyrimidine synthase (563 aa).

The interval 95-115 (PGKNPSPMNNRTPVRAKQGKS) is disordered. Residues Asn-200, Met-229, Tyr-258, His-294, 314–316 (SRG), 355–358 (DALR), and Glu-394 contribute to the substrate site. His-398 is a binding site for Zn(2+). Tyr-421 provides a ligand contact to substrate. His-462 is a binding site for Zn(2+). [4Fe-4S] cluster-binding residues include Cys-544, Cys-547, and Cys-552.

The protein belongs to the ThiC family. Requires [4Fe-4S] cluster as cofactor.

The enzyme catalyses 5-amino-1-(5-phospho-beta-D-ribosyl)imidazole + S-adenosyl-L-methionine = 4-amino-2-methyl-5-(phosphooxymethyl)pyrimidine + CO + 5'-deoxyadenosine + formate + L-methionine + 3 H(+). It participates in cofactor biosynthesis; thiamine diphosphate biosynthesis. Catalyzes the synthesis of the hydroxymethylpyrimidine phosphate (HMP-P) moiety of thiamine from aminoimidazole ribotide (AIR) in a radical S-adenosyl-L-methionine (SAM)-dependent reaction. This chain is Phosphomethylpyrimidine synthase, found in Chlorobium phaeobacteroides (strain BS1).